The sequence spans 256 residues: MMNTRALLPLSVLLMATLCLCELPIPILQRFVRSVPEECPIADPSDFKFSITSNRNKTGHWTAQVRLEHGEHEQSGSNQHNRDLWQVDLEQTTTTCAGVKSVQIITTITAPPPTAAPSIPPGYELSAVLGYYKFHKTPKTWDEARIICQQEGGHLVIINSEDESKVLQNLFSKVTKTEGATNNDYIFIGIHDRFVEGEFITIFGKPLATTGFTRWVDSIQPDNAGGNENCGSMHPNGGLNDIPCPWKLPFVCEVEL.

The first 21 residues, 1 to 21 (MMNTRALLPLSVLLMATLCLC), serve as a signal peptide directing secretion. Residues 22 to 33 (ELPIPILQRFVR) constitute a propeptide that is removed on maturation. N-linked (GlcNAc...) asparagine glycosylation occurs at asparagine 56. The 111-residue stretch at 146–256 (IICQQEGGHL…KLPFVCEVEL (111 aa)) folds into the C-type lectin domain. 2 disulfide bridges follow: cysteine 148–cysteine 252 and cysteine 230–cysteine 244.

In terms of tissue distribution, hemolymph.

The protein localises to the secreted. Participates probably in the elimination of foreign substances invading the insect abdominal cavity, and in trapping intracellular symbionts, when they leak from the mycetomes into the hemolymph. The sequence is that of Hemolymph lipopolysaccharide-binding protein from Periplaneta americana (American cockroach).